The sequence spans 356 residues: DNA polymerase IV (356 aa).

In terms of domain architecture, UmuC spans 6-187 (IIHIDMDYFF…LDIGDFPGVG (182 aa)). Mg(2+) is bound by residues Asp-10 and Asp-105. Glu-106 is a catalytic residue.

The protein belongs to the DNA polymerase type-Y family. As to quaternary structure, monomer. Mg(2+) serves as cofactor.

Its subcellular location is the cytoplasm. The enzyme catalyses DNA(n) + a 2'-deoxyribonucleoside 5'-triphosphate = DNA(n+1) + diphosphate. In terms of biological role, poorly processive, error-prone DNA polymerase involved in untargeted mutagenesis. Copies undamaged DNA at stalled replication forks, which arise in vivo from mismatched or misaligned primer ends. These misaligned primers can be extended by PolIV. Exhibits no 3'-5' exonuclease (proofreading) activity. May be involved in translesional synthesis, in conjunction with the beta clamp from PolIII. In Staphylococcus aureus (strain COL), this protein is DNA polymerase IV.